The chain runs to 431 residues: 3-phosphoshikimate 1-carboxyvinyltransferase (431 aa).

3-phosphoshikimate-binding residues include lysine 21, serine 22, and arginine 26. Lysine 21 serves as a coordination point for phosphoenolpyruvate. Phosphoenolpyruvate-binding residues include glycine 93 and arginine 121. Serine 166, glutamine 168, serine 192, aspartate 317, and lysine 344 together coordinate 3-phosphoshikimate. Glutamine 168 contacts phosphoenolpyruvate. Aspartate 317 serves as the catalytic Proton acceptor. Phosphoenolpyruvate is bound by residues arginine 348 and arginine 390.

This sequence belongs to the EPSP synthase family. As to quaternary structure, monomer.

It is found in the cytoplasm. The enzyme catalyses 3-phosphoshikimate + phosphoenolpyruvate = 5-O-(1-carboxyvinyl)-3-phosphoshikimate + phosphate. The protein operates within metabolic intermediate biosynthesis; chorismate biosynthesis; chorismate from D-erythrose 4-phosphate and phosphoenolpyruvate: step 6/7. In terms of biological role, catalyzes the transfer of the enolpyruvyl moiety of phosphoenolpyruvate (PEP) to the 5-hydroxyl of shikimate-3-phosphate (S3P) to produce enolpyruvyl shikimate-3-phosphate and inorganic phosphate. The chain is 3-phosphoshikimate 1-carboxyvinyltransferase from Herpetosiphon aurantiacus (strain ATCC 23779 / DSM 785 / 114-95).